Consider the following 695-residue polypeptide: MGCRWNPIGFQFSCFMFLIITLQSRSSLSLESEGFVLLKFRARVDSDPHGTLANWNVSDHDHFCSWFGVTCVDNKVQMLNLSGCSLGGTLAPELSQLSELRSLILSKNKLSGDIPNEFASFAKLEFLDLRDNNLNGVVPPELNKVLTPENLLLSGNKFAGFMTVKFLRLQSLYKVQMNKNRELSSVSADVLDCVNRKLGYCVSRRSLITRNKAKAFVLRIRATSRHYMVRRESHGKNYVVNYHPSENETSIFKRRELLEETSNLAAMPAPDTPSPSPEIITIVFPRSSGSFPALTNAKKRIPPLIPPSSPPPLPTNNTIASDPPRKFEEKSKGFKDVWLYVVIGVAAFVAMLIIVAVIFFFRKRAVKSIGPWKTGLSGQLQKAFVTGVPKLNRSELETACEDFSNIIEAFDGYTVYKGTLSSGVEIAVASTAILETREWTRAMEMTYRRRIDTMSRVNHKNFINLIGYCEEDEPFNRMMVFEYAPNGTLFEHLHDKEMEHLDWNARTRIIMGTAYCLQYMHELNPPISHTKLVSSAIYLTDDYAAKVGEVPFSGQTGSKPRKPMSGDLDQSLLPLPPEPETNVYSFGVLMLEIISGKLSDSEEEGSILKWASKYLENDNLRDMIDPTLTTYKEEELEAICDVARHCLKLDESQRPKMKYVVQQLKEVINISQEQATPRLSPLWWAELEILSSEAT.

Residues 1-29 (MGCRWNPIGFQFSCFMFLIITLQSRSSLS) form the signal peptide. Over 30–340 (LESEGFVLLK…SKGFKDVWLY (311 aa)) the chain is Extracellular. N-linked (GlcNAc...) asparagine glycans are attached at residues Asn-56 and Asn-80. 4 LRR repeats span residues 75–98 (KVQM…SQLS), 99–121 (ELRS…FASF), 123–144 (KLEF…ELNK), and 147–168 (TPEN…KFLR). Asn-247 is a glycosylation site (N-linked (GlcNAc...) asparagine). The interval 302 to 325 (PPLIPPSSPPPLPTNNTIASDPPR) is disordered. Positions 303–314 (PLIPPSSPPPLP) are enriched in pro residues. A glycan (N-linked (GlcNAc...) asparagine) is linked at Asn-316. A helical membrane pass occupies residues 341–361 (VVIGVAAFVAMLIIVAVIFFF). The Cytoplasmic portion of the chain corresponds to 362–695 (RKRAVKSIGP…ELEILSSEAT (334 aa)). The region spanning 363–668 (KRAVKSIGPW…YVVQQLKEVI (306 aa)) is the Protein kinase domain. Ser-652 is subject to Phosphoserine.

This sequence belongs to the protein kinase superfamily. Ser/Thr protein kinase family. As to quaternary structure, homodimer. Interacts with MIK1, MIK2 and LURE1.2. LURE1.2 enhances the heterodimerization of MDIS1 with MIK1 or MIK2. Post-translationally, phosphorylated by MIK1. As to expression, expressed in pollen tubes and seedlings.

Its subcellular location is the cell membrane. It localises to the endomembrane system. It carries out the reaction L-seryl-[protein] + ATP = O-phospho-L-seryl-[protein] + ADP + H(+). The enzyme catalyses L-threonyl-[protein] + ATP = O-phospho-L-threonyl-[protein] + ADP + H(+). Its function is as follows. Involved in the pollen tube perception of the female signal. This is Protein MALE DISCOVERER 1 from Arabidopsis thaliana (Mouse-ear cress).